We begin with the raw amino-acid sequence, 523 residues long: DNA-(apurinic or apyrimidinic site) endonuclease 2 (523 aa).

E42 provides a ligand contact to Mg(2+). Residue Y151 is part of the active site. Mg(2+)-binding residues include D191, N193, and D294. Residue D191 is the Proton donor/acceptor of the active site. The disordered stretch occupies residues 348 to 392 (MKKNKNNSPTQSENVSASASSGSSPTVSRANSVIDVDAYPPEKRR). Positions 353–362 (NNSPTQSENV) are enriched in polar residues. Zn(2+) is bound by residues C458, H461, C484, and C508. Residues 458-517 (CEGHKEPCKYLTVRKPGINYGRKFWICARPVGELIKNSNAVSEEDTQPFQCRFFIWDSDW) form a GRF-type zinc finger.

Belongs to the DNA repair enzymes AP/ExoA family. Requires Mg(2+) as cofactor. Mn(2+) serves as cofactor.

The protein resides in the nucleus. It carries out the reaction Exonucleolytic cleavage in the 3'- to 5'-direction to yield nucleoside 5'-phosphates.. DNA repair enzyme that cleaves apurinic/apyrimidinic (AP) sites and removes 3'-blocking groups present at single strand breaks of damaged DNA. Provides the majority of the AP-endonuclease (APE) activity. Repairs phleomycin D1-induced DNA damage. Plays a role in oxidative damage repair. This is DNA-(apurinic or apyrimidinic site) endonuclease 2 (apn2) from Schizosaccharomyces pombe (strain 972 / ATCC 24843) (Fission yeast).